The chain runs to 231 residues: Probable transaldolase (231 aa).

The active-site Schiff-base intermediate with substrate is the lysine 83.

It belongs to the transaldolase family. Type 3B subfamily.

It is found in the cytoplasm. It catalyses the reaction D-sedoheptulose 7-phosphate + D-glyceraldehyde 3-phosphate = D-erythrose 4-phosphate + beta-D-fructose 6-phosphate. Its pathway is carbohydrate degradation; pentose phosphate pathway; D-glyceraldehyde 3-phosphate and beta-D-fructose 6-phosphate from D-ribose 5-phosphate and D-xylulose 5-phosphate (non-oxidative stage): step 2/3. In terms of biological role, transaldolase is important for the balance of metabolites in the pentose-phosphate pathway. This is Probable transaldolase from Rhodospirillum centenum (strain ATCC 51521 / SW).